Here is a 136-residue protein sequence, read N- to C-terminus: Group 1 truncated hemoglobin GlbN (136 aa).

Residue H81 participates in heme binding.

Belongs to the truncated hemoglobin family. Group I subfamily. As to quaternary structure, homodimer. It depends on heme as a cofactor.

Its function is as follows. Binds oxygen cooperatively with very high affinity because of a fast combination and a slow dissociation rate. This Mycolicibacterium paratuberculosis (strain ATCC BAA-968 / K-10) (Mycobacterium paratuberculosis) protein is Group 1 truncated hemoglobin GlbN (glbN).